The sequence spans 591 residues: Formate--tetrahydrofolate ligase (591 aa).

74-81 is a binding site for ATP; the sequence is TPLGEGKS.

It belongs to the formate--tetrahydrofolate ligase family.

The catalysed reaction is (6S)-5,6,7,8-tetrahydrofolate + formate + ATP = (6R)-10-formyltetrahydrofolate + ADP + phosphate. It functions in the pathway one-carbon metabolism; tetrahydrofolate interconversion. This chain is Formate--tetrahydrofolate ligase, found in Lawsonia intracellularis (strain PHE/MN1-00).